Here is a 361-residue protein sequence, read N- to C-terminus: tRNA-specific 2-thiouridylase MnmA (361 aa).

Residues 8–15 (GMSGGVDS) and Met34 each bind ATP. The tract at residues 94–96 (NPD) is interaction with target base in tRNA. Cys99 serves as the catalytic Nucleophile. Residues Cys99 and Cys195 are joined by a disulfide bond. Gly123 is an ATP binding site. Residues 145-147 (KDQ) are interaction with tRNA. Residue Cys195 is the Cysteine persulfide intermediate of the active site. An interaction with tRNA region spans residues 307–308 (RY).

This sequence belongs to the MnmA/TRMU family.

It is found in the cytoplasm. The catalysed reaction is S-sulfanyl-L-cysteinyl-[protein] + uridine(34) in tRNA + AH2 + ATP = 2-thiouridine(34) in tRNA + L-cysteinyl-[protein] + A + AMP + diphosphate + H(+). In terms of biological role, catalyzes the 2-thiolation of uridine at the wobble position (U34) of tRNA, leading to the formation of s(2)U34. This Legionella pneumophila subsp. pneumophila (strain Philadelphia 1 / ATCC 33152 / DSM 7513) protein is tRNA-specific 2-thiouridylase MnmA.